A 2500-amino-acid polypeptide reads, in one-letter code: Non-reducing polyketide synthase atr1 (2500 aa).

Residues 13–260 (VFSPQSKAPK…HNPENANLAL (248 aa)) are N-terminal acylcarrier protein transacylase domain (SAT). Positions 385–808 (TDAVAVVGMA…GSNSAVLLCQ (424 aa)) constitute a Ketosynthase family 3 (KS3) domain. Active-site for beta-ketoacyl synthase activity residues include Cys-557, His-692, and His-731. The tract at residues 908 to 1199 (MTFSGQSRQS…EFPERHTFLD (292 aa)) is malonyl-CoA:ACP transacylase (MAT) domain. The active-site For acyl/malonyl transferase activity is the Ser-995. Positions 1286–1413 (PRLVEPRTKP…GDFGFTTQTQ (128 aa)) are N-terminal hotdog fold. The PKS/mFAS DH domain maps to 1286–1584 (PRLVEPRTKP…FTKLPITRLE (299 aa)). The product template (PT) domain stretch occupies residues 1287–1583 (RLVEPRTKPS…QFTKLPITRL (297 aa)). The Proton acceptor; for dehydratase activity role is filled by His-1317. Residues 1433-1584 (SETLKSKRAY…FTKLPITRLE (152 aa)) form a C-terminal hotdog fold region. Catalysis depends on Asp-1495, which acts as the Proton donor; for dehydratase activity. The tract at residues 1594-1649 (AHNTPILKSSQQDSIVSASSSSSTEHSDDDSEDDGSRSPSHSDTSVDSESEAPADN) is disordered. Residues 1602-1617 (SSQQDSIVSASSSSST) show a composition bias toward low complexity. One can recognise a Carrier domain in the interval 1649 to 1725 (NGAAKKLKSL…RIVAPEMAAK (77 aa)). Ser-1683 is subject to O-(pantetheine 4'-phosphoryl)serine. Residues 2164–2496 (KSYRIETMPY…YEFIFDVVGR (333 aa)) are thioesterase (TE) domain. Active-site for thioesterase activity residues include Ser-2285 and Asp-2434.

It carries out the reaction 6 malonyl-CoA + 2 acetyl-CoA + 2 S-adenosyl-L-methionine + 3 H(+) = 4-O-demethylbarbatate + 2 S-adenosyl-L-homocysteine + 6 CO2 + 8 CoA + H2O. The protein operates within secondary metabolite biosynthesis; terpenoid biosynthesis. In terms of biological role, non-reducing polyketide synthase; part of the gene cluster that mediates the biosynthesis of atranorin, a depside of polyketide origin that accumulates in the cortical or medullary layers of lichen thalli. The first step in the pathway is performed by the non-reducing polyketide synthase atr1 that produces 4-O-demethylbarbatic acid composed of two 3-methylorsellinic acid (3MOA) moieties from S-adenosyl-L-methionine (SAM), acetyl-CoA and malonyl-CoA units. The pathway continues with the actions of the cytochrome P450 monooygenase atr2 that catalizes the oxidation of c-9 and the O-methyltransferase atr3 that performs the methylation of the carboxyl group to yield atranorin, via the proatranorin II and III intermediates if atr2 acts first, or the proatranorin I intermediate if atr3 acts first. This Stereocaulon alpinum (Alpine snow lichen) protein is Non-reducing polyketide synthase atr1.